The primary structure comprises 411 residues: ATP-dependent RNA helicase eIF4A (411 aa).

The interval 1-23 (MSKPEDTSAAAAAPAGEAGNNLN) is disordered. The segment covering 9–19 (AAAAAPAGEAG) has biased composition (low complexity). The short motif at 38 to 66 (DNFDNMELKEELLRGVYAYGFERPSAIQA) is the Q motif element. The Helicase ATP-binding domain occupies 69 to 239 (IVPVIKGHDV…KKFMRDPIRI (171 aa)). Position 82–89 (82–89 (AQSGTGKT)) interacts with ATP. Positions 187–190 (DEAD) match the DEAD box motif. A Helicase C-terminal domain is found at 250–411 (GIKQFYVAVE…EMPLNVADLI (162 aa)).

The protein belongs to the DEAD box helicase family. eIF4A subfamily. In terms of assembly, component of the eIF4F complex, which composition varies with external and internal environmental conditions. It is composed of at least eIF4A, eIF4E and eIF4G.

It localises to the cytoplasm. It carries out the reaction ATP + H2O = ADP + phosphate + H(+). Functionally, ATP-dependent RNA helicase which is a subunit of the eIF4F complex involved in cap recognition and is required for mRNA binding to ribosome. In the current model of translation initiation, eIF4A unwinds RNA secondary structures in the 5'-UTR of mRNAs which is necessary to allow efficient binding of the small ribosomal subunit, and subsequent scanning for the initiator codon. The chain is ATP-dependent RNA helicase eIF4A (TIF1) from Mycosarcoma maydis (Corn smut fungus).